Here is a 443-residue protein sequence, read N- to C-terminus: Flavastacin (443 aa).

The first 15 residues, 1 to 15, serve as a signal peptide directing secretion; the sequence is MTRKLLILSGCLILA. Positions 16–91 are cleaved as a propeptide — activation peptide; the sequence is LNSCKSDMET…ANPDISTVER (76 aa). Residues 92–289 enclose the Peptidase M12A domain; that stretch reads STIVSSFIKT…AGINHLYGPV (198 aa). His-189 lines the Zn(2+) pocket. Glu-190 is an active-site residue. Zn(2+)-binding residues include His-193 and His-199. The region spanning 297–440 is the Ricin B-type lectin domain; sequence GTYTLTTSLA…PYTKQRFTLT (144 aa). The O-linked (Man...) serine glycan is linked to Ser-355.

The cofactor is Zn(2+). Post-translationally, O-linked glycan consists of the Man, GlcNAc, GlcU, Glc, GlcU, Rha, Man heptasaccharide.

It catalyses the reaction Hydrolyzes polypeptides on the amino-side of Asp in -Xaa-|-Asp-. Acts very slowly on -Xaa-|-Glu.. Its function is as follows. Zinc metallendopeptidase that cleaves preferentially on N-terminal side of aspartate-containing substrates. This is Flavastacin from Elizabethkingia meningoseptica (Chryseobacterium meningosepticum).